The sequence spans 225 residues: MISWINGELVETWQTNQKFFVLINCQGLGYEIQILESFFLKLKTNQISNKKITLWIKHIKKEDSDLLFGFTSKDQKFFFIEILSVRGVGSQIGMSILNKFSISEIIKAIKTQDKKLICSIPGIGQKMSDRLILELKSKFKSKIQIEEEKGQEEFEITNPEIYKLMEDLQLTLQSLNYKNKEIKTILPFLIKELGLPTKKEKNLSFENLLNLAMNHLDQGNSNLAR.

The segment at 1–71 is domain I; sequence MISWINGELV…EDSDLLFGFT (71 aa). A domain II region spans residues 72-150; it reads SKDQKFFFIE…SKIQIEEEKG (79 aa). Residues 151–161 form a flexible linker region; the sequence is QEEFEITNPEI. Residues 161-225 are domain III; that stretch reads IYKLMEDLQL…LDQGNSNLAR (65 aa).

The protein belongs to the RuvA family. As to quaternary structure, homotetramer. Forms an RuvA(8)-RuvB(12)-Holliday junction (HJ) complex. HJ DNA is sandwiched between 2 RuvA tetramers; dsDNA enters through RuvA and exits via RuvB. An RuvB hexamer assembles on each DNA strand where it exits the tetramer. Each RuvB hexamer is contacted by two RuvA subunits (via domain III) on 2 adjacent RuvB subunits; this complex drives branch migration. In the full resolvosome a probable DNA-RuvA(4)-RuvB(12)-RuvC(2) complex forms which resolves the HJ.

The protein resides in the cytoplasm. Its function is as follows. The RuvA-RuvB-RuvC complex processes Holliday junction (HJ) DNA during genetic recombination and DNA repair, while the RuvA-RuvB complex plays an important role in the rescue of blocked DNA replication forks via replication fork reversal (RFR). RuvA specifically binds to HJ cruciform DNA, conferring on it an open structure. The RuvB hexamer acts as an ATP-dependent pump, pulling dsDNA into and through the RuvAB complex. HJ branch migration allows RuvC to scan DNA until it finds its consensus sequence, where it cleaves and resolves the cruciform DNA. This chain is Holliday junction branch migration complex subunit RuvA, found in Prochlorococcus marinus (strain MIT 9215).